Consider the following 149-residue polypeptide: Transcriptional repressor NrdR (149 aa).

Residues 3–34 (CPFCNADDTKVIDSRLVADGHQVRRRRECLVC) fold into a zinc finger. The ATP-cone domain occupies 49-139 (PRVIKSNGVR…VYRSFEDIRE (91 aa)).

The protein belongs to the NrdR family. Requires Zn(2+) as cofactor.

Its function is as follows. Negatively regulates transcription of bacterial ribonucleotide reductase nrd genes and operons by binding to NrdR-boxes. This Tolumonas auensis (strain DSM 9187 / NBRC 110442 / TA 4) protein is Transcriptional repressor NrdR.